A 216-amino-acid polypeptide reads, in one-letter code: GTP cyclohydrolase 1 (216 aa).

3 residues coordinate Zn(2+): Cys-109, His-112, and Cys-180.

Belongs to the GTP cyclohydrolase I family. Homomer.

The enzyme catalyses GTP + H2O = 7,8-dihydroneopterin 3'-triphosphate + formate + H(+). It functions in the pathway cofactor biosynthesis; 7,8-dihydroneopterin triphosphate biosynthesis; 7,8-dihydroneopterin triphosphate from GTP: step 1/1. The polypeptide is GTP cyclohydrolase 1 (Tolumonas auensis (strain DSM 9187 / NBRC 110442 / TA 4)).